Reading from the N-terminus, the 130-residue chain is Small ribosomal subunit protein uS11c (130 aa).

Belongs to the universal ribosomal protein uS11 family. As to quaternary structure, part of the 30S ribosomal subunit.

The protein localises to the plastid. Its subcellular location is the chloroplast. The protein is Small ribosomal subunit protein uS11c of Mesostigma viride (Green alga).